A 377-amino-acid chain; its full sequence is Phospho-N-acetylmuramoyl-pentapeptide-transferase (377 aa).

10 consecutive transmembrane segments (helical) span residues 27 to 47 (TAFA…YVIE), 71 to 91 (GTPT…TLLW), 94 to 114 (LSDP…AIGF), 139 to 159 (ILAS…GSYS), 182 to 202 (VPHL…IVIV), 216 to 236 (GLAI…TYVS), 252 to 272 (MVGE…GFLW), 280 to 300 (IFMG…VAVV), 305 to 325 (LLLP…ILQV), and 354 to 374 (KVIV…LTTL).

The protein belongs to the glycosyltransferase 4 family. MraY subfamily. Requires Mg(2+) as cofactor.

It localises to the cell inner membrane. It carries out the reaction UDP-N-acetyl-alpha-D-muramoyl-L-alanyl-gamma-D-glutamyl-meso-2,6-diaminopimeloyl-D-alanyl-D-alanine + di-trans,octa-cis-undecaprenyl phosphate = di-trans,octa-cis-undecaprenyl diphospho-N-acetyl-alpha-D-muramoyl-L-alanyl-D-glutamyl-meso-2,6-diaminopimeloyl-D-alanyl-D-alanine + UMP. It participates in cell wall biogenesis; peptidoglycan biosynthesis. In terms of biological role, catalyzes the initial step of the lipid cycle reactions in the biosynthesis of the cell wall peptidoglycan: transfers peptidoglycan precursor phospho-MurNAc-pentapeptide from UDP-MurNAc-pentapeptide onto the lipid carrier undecaprenyl phosphate, yielding undecaprenyl-pyrophosphoryl-MurNAc-pentapeptide, known as lipid I. In Acidobacterium capsulatum (strain ATCC 51196 / DSM 11244 / BCRC 80197 / JCM 7670 / NBRC 15755 / NCIMB 13165 / 161), this protein is Phospho-N-acetylmuramoyl-pentapeptide-transferase.